The sequence spans 613 residues: ATP-dependent RNA helicase DRS1 (613 aa).

Disordered regions lie at residues 1–20 and 79–104; these read MPDF…SDSE and GFGM…PEVK. Acidic residues-rich tracts occupy residues 9–18 and 88–100; these read DSDEEVDVSD and EEEE…EVEV. The Q motif signature appears at 130-158; it reads TSFQTLQLSRPVLKGIAELKFTKPTPIQS. Residues 161–335 form the Helicase ATP-binding domain; that stretch reads IPIALLGKDI…QLSLQKPVRI (175 aa). An ATP-binding site is contributed by 174–181; sequence AQTGSGKT. A DEAD box motif is present at residues 282 to 285; it reads DEAD. The region spanning 364-541 is the Helicase C-terminal domain; it reads LLYQLLKGVS…ELLRAEMELT (178 aa). Residues 504-552 adopt a coiled-coil conformation; sequence KQAEETNKLLESKESVIDEVLEEEKEAKELLRAEMELTKASNLIKHEQE. Residues 571-613 form a disordered region; sequence TKHGKKVNSKKRKANEVRKDEGRSYKKTKTDRMKISNKKKSKK. Positions 572 to 583 are enriched in basic residues; it reads KHGKKVNSKKRK. The segment covering 584–604 has biased composition (basic and acidic residues); the sequence is ANEVRKDEGRSYKKTKTDRMK.

It belongs to the DEAD box helicase family. DDX27/DRS1 subfamily. In terms of assembly, associates with pre-ribosomal particles.

Its subcellular location is the nucleus. The protein localises to the nucleolus. The enzyme catalyses ATP + H2O = ADP + phosphate + H(+). ATP-binding RNA helicase involved in ribosome assembly. The sequence is that of ATP-dependent RNA helicase DRS1 (DRS1) from Candida albicans (strain SC5314 / ATCC MYA-2876) (Yeast).